Here is a 307-residue protein sequence, read N- to C-terminus: UDP-N-acetylenolpyruvoylglucosamine reductase (307 aa).

Positions 33-198 (KVGGPVDILV…LEAILKLSLG (166 aa)) constitute an FAD-binding PCMH-type domain. The active site involves Arg177. Ser227 acts as the Proton donor in catalysis. Glu297 is a catalytic residue.

This sequence belongs to the MurB family. The cofactor is FAD.

It is found in the cytoplasm. It catalyses the reaction UDP-N-acetyl-alpha-D-muramate + NADP(+) = UDP-N-acetyl-3-O-(1-carboxyvinyl)-alpha-D-glucosamine + NADPH + H(+). It functions in the pathway cell wall biogenesis; peptidoglycan biosynthesis. In terms of biological role, cell wall formation. The chain is UDP-N-acetylenolpyruvoylglucosamine reductase from Clostridium tetani (strain Massachusetts / E88).